The sequence spans 236 residues: uncharacterized protein (236 aa).

This is an uncharacterized protein from Schizosaccharomyces pombe (strain 972 / ATCC 24843) (Fission yeast).